A 222-amino-acid polypeptide reads, in one-letter code: Extracellular protein ARB_03106 (222 aa).

An N-terminal signal peptide occupies residues 1 to 18 (MRLHSVLAVATAVGCAVA). Residues asparagine 113 and asparagine 126 are each glycosylated (N-linked (GlcNAc...) asparagine).

The protein localises to the secreted. The chain is Extracellular protein ARB_03106 from Arthroderma benhamiae (strain ATCC MYA-4681 / CBS 112371) (Trichophyton mentagrophytes).